Consider the following 302-residue polypeptide: tRNA dimethylallyltransferase (302 aa).

9–16 is a binding site for ATP; it reads GPTGSGKT. A substrate-binding site is contributed by 11 to 16; sequence TGSGKT.

The protein belongs to the IPP transferase family. As to quaternary structure, monomer. Mg(2+) is required as a cofactor.

It catalyses the reaction adenosine(37) in tRNA + dimethylallyl diphosphate = N(6)-dimethylallyladenosine(37) in tRNA + diphosphate. In terms of biological role, catalyzes the transfer of a dimethylallyl group onto the adenine at position 37 in tRNAs that read codons beginning with uridine, leading to the formation of N6-(dimethylallyl)adenosine (i(6)A). The sequence is that of tRNA dimethylallyltransferase from Thermus thermophilus (strain ATCC BAA-163 / DSM 7039 / HB27).